The following is a 902-amino-acid chain: Probable dipeptidyl-aminopeptidase B (902 aa).

2 disordered regions span residues 1–23 and 53–72; these read MTRR…LSVD and DAEA…KLGS. At 1–78 the chain is on the cytoplasmic side; it reads MTRRRSTSGT…KLGSGSRTRQ (78 aa). Low complexity predominate over residues 7-21; the sequence is TSGTSSRSSTDSGLS. The helical; Signal-anchor for type II membrane protein transmembrane segment at 79 to 99 threads the bilayer; it reads IFWALVILCLGGWVLALVLFL. The Vacuolar portion of the chain corresponds to 100 to 902; it reads THGRASSQTA…VKRSVPAFAH (803 aa). Residues Asn-335 and Asn-626 are each glycosylated (N-linked (GlcNAc...) asparagine). The active-site Charge relay system is the Ser-740. N-linked (GlcNAc...) asparagine glycosylation is found at Asn-794 and Asn-799. Residues Asp-817 and His-850 each act as charge relay system in the active site.

Belongs to the peptidase S9B family.

It localises to the vacuole membrane. It carries out the reaction Release of an N-terminal dipeptide, Xaa-Yaa-|-Zaa-, from a polypeptide, preferentially when Yaa is Pro, provided Zaa is neither Pro nor hydroxyproline.. Type IV dipeptidyl-peptidase which removes N-terminal dipeptides sequentially from polypeptides having unsubstituted N-termini provided that the penultimate residue is proline. The chain is Probable dipeptidyl-aminopeptidase B (dapB) from Aspergillus oryzae (strain ATCC 42149 / RIB 40) (Yellow koji mold).